A 249-amino-acid polypeptide reads, in one-letter code: DNA repair protein RecO (249 aa).

Belongs to the RecO family.

Involved in DNA repair and RecF pathway recombination. This Polaromonas naphthalenivorans (strain CJ2) protein is DNA repair protein RecO.